A 111-amino-acid polypeptide reads, in one-letter code: Probable 4-amino-4-deoxy-L-arabinose-phosphoundecaprenol flippase subunit ArnE (111 aa).

Helical transmembrane passes span tryptophan 39 to glutamine 59, valine 61 to alanine 81, and valine 89 to valine 109. The region spanning leucine 40–valine 109 is the EamA domain.

Belongs to the ArnE family. Heterodimer of ArnE and ArnF.

The protein localises to the cell inner membrane. It functions in the pathway bacterial outer membrane biogenesis; lipopolysaccharide biosynthesis. In terms of biological role, translocates 4-amino-4-deoxy-L-arabinose-phosphoundecaprenol (alpha-L-Ara4N-phosphoundecaprenol) from the cytoplasmic to the periplasmic side of the inner membrane. In Sodalis glossinidius (strain morsitans), this protein is Probable 4-amino-4-deoxy-L-arabinose-phosphoundecaprenol flippase subunit ArnE.